The sequence spans 649 residues: Glucan endo-1,3-beta-glucosidase btgC (649 aa).

Disordered regions lie at residues 1-50 (MGDR…AHTH) and 110-224 (YHTT…AGGA). The Cytoplasmic segment spans residues 1–274 (MGDRSEQYGD…PRPSGASRKR (274 aa)). Over residues 144-157 (GSSAALSAAGAPAG) the composition is skewed to low complexity. Over residues 198-208 (NPDDILDDGDD) the composition is skewed to acidic residues. The chain crosses the membrane as a helical; Signal-anchor for type II membrane protein span at residues 275-295 (GWIIGGILAFIVIGAIVGGAV). At 296–649 (GGTLGNRRSE…IPDCGGKTAA (354 aa)) the chain is on the extracellular side. Positions 301-329 (NRRSETASESSEVSADDDTETNGDLDKNS) are disordered. Positions 314–323 (SADDDTETNG) are enriched in acidic residues. N-linked (GlcNAc...) asparagine glycans are attached at residues Asn369, Asn392, and Asn420. Glu452 (proton donor) is an active-site residue. The active-site Nucleophile is the Glu551. Asn596 carries N-linked (GlcNAc...) asparagine glycosylation.

This sequence belongs to the glycosyl hydrolase 17 family.

It localises to the cell membrane. The enzyme catalyses Hydrolysis of (1-&gt;3)-beta-D-glucosidic linkages in (1-&gt;3)-beta-D-glucans.. Its function is as follows. Glucanases play a role in cell expansion during growth, in cell-cell fusion during mating, and in spore release during sporulation. This enzyme may be involved in beta-glucan degradation. Active on laminarin and lichenan. The polypeptide is Glucan endo-1,3-beta-glucosidase btgC (btgC) (Emericella nidulans (strain FGSC A4 / ATCC 38163 / CBS 112.46 / NRRL 194 / M139) (Aspergillus nidulans)).